A 137-amino-acid chain; its full sequence is uncharacterized protein (137 aa).

This is an uncharacterized protein from Schizosaccharomyces pombe (strain 972 / ATCC 24843) (Fission yeast).